The following is a 237-amino-acid chain: tRNA (guanine-N(7)-)-methyltransferase (237 aa).

Residues aspartate 35, glutamate 60, asparagine 87, and aspartate 113 each coordinate S-adenosyl-L-methionine. Aspartate 113 is a catalytic residue. Substrate is bound by residues lysine 117 and aspartate 149.

The protein belongs to the class I-like SAM-binding methyltransferase superfamily. TrmB family.

The enzyme catalyses guanosine(46) in tRNA + S-adenosyl-L-methionine = N(7)-methylguanosine(46) in tRNA + S-adenosyl-L-homocysteine. It functions in the pathway tRNA modification; N(7)-methylguanine-tRNA biosynthesis. Functionally, catalyzes the formation of N(7)-methylguanine at position 46 (m7G46) in tRNA. The polypeptide is tRNA (guanine-N(7)-)-methyltransferase (Synechococcus sp. (strain WH7803)).